The sequence spans 233 residues: Adenosine 5'-phosphosulfate reductase (233 aa).

Positions 120, 121, 203, and 206 each coordinate [4Fe-4S] cluster. C229 serves as the catalytic Nucleophile; cysteine thiosulfonate intermediate.

It belongs to the PAPS reductase family. CysH subfamily. [4Fe-4S] cluster serves as cofactor.

The protein resides in the cytoplasm. The catalysed reaction is [thioredoxin]-disulfide + sulfite + AMP + 2 H(+) = adenosine 5'-phosphosulfate + [thioredoxin]-dithiol. It participates in sulfur metabolism; hydrogen sulfide biosynthesis; sulfite from sulfate. Catalyzes the formation of sulfite from adenosine 5'-phosphosulfate (APS) using thioredoxin as an electron donor. This chain is Adenosine 5'-phosphosulfate reductase, found in Bacillus pumilus (strain SAFR-032).